The chain runs to 116 residues: Movement protein TGB2 (116 aa).

Topologically, residues 1–11 are cytoplasmic; it reads MPLTPPPNPQK. A helical membrane pass occupies residues 12–32; sequence TYQIAILALGLVLLAFVLISD. The Lumenal portion of the chain corresponds to 33-77; sequence HSPKVGDHLHNLPFGGEYKDGTKSIKYFQRPNQHSLSKTLAKSHN. A helical membrane pass occupies residues 78 to 98; it reads TTIFLLILGLIVTLHGLHYFN. Residues 99-116 are Cytoplasmic-facing; that stretch reads NNRRVSSSLHCVLCQNKH.

Belongs to the Tymovirales TGBp2 protein family.

Its subcellular location is the host endoplasmic reticulum membrane. In terms of biological role, plays a role in viral cell-to-cell propagation, by facilitating genome transport to neighboring plant cells through plasmosdesmata,. In White clover mosaic virus (strain M) (WCMV), this protein is Movement protein TGB2.